Here is a 621-residue protein sequence, read N- to C-terminus: Glutathione-regulated potassium-efflux system protein KefC (621 aa).

A run of 12 helical transmembrane segments spans residues 4-24 (HTLIQALIYLGAAALIVPIAV), 26-46 (LGLGSVLGYLIAGCIIGPWGL), 54-74 (AILHFAEIGVVLMLFVIGLEL), 90-110 (GALQMVACGVLIGLFCMLLGL), 114-134 (VAELIGMTLALSSTAIAMQAM), 149-169 (FAVLLFQDIAAIPLVAMIPLL), 178-198 (LVAFALSALKVAAALALVVAL), 218-238 (VFSAVALFLVFGFGLLLEEVG), 270-290 (GLLLGLFFIGVGMSIDFGTLV), 294-314 (LRIVILLVGFLAIKMLMLWLI), 326-346 (RWFAVLLGQGSEFAFVVFGAA), and 359-379 (ALTLAVALSMAATPVLLVLLT). The RCK N-terminal domain maps to 399 to 518 (QPRVIVAGFG…AGVEAPERET (120 aa)). Residues 598 to 621 (GWQGTEEGRHTGDIADEPENKPSA) are disordered.

The protein belongs to the monovalent cation:proton antiporter 2 (CPA2) transporter (TC 2.A.37) family. KefC subfamily. In terms of assembly, homodimer. Interacts with the regulatory subunit KefF.

It localises to the cell inner membrane. Its function is as follows. Pore-forming subunit of a potassium efflux system that confers protection against electrophiles. Catalyzes K(+)/H(+) antiport. The chain is Glutathione-regulated potassium-efflux system protein KefC from Klebsiella pneumoniae (strain 342).